An 81-amino-acid chain; its full sequence is Saposin-C (81 aa).

Positions 1–81 (ESVTCKACEY…CSELGLCMSG (81 aa)) constitute a Saposin B-type domain. Intrachain disulfides connect Cys5/Cys78, Cys8/Cys72, and Cys36/Cys47. Asn22 carries N-linked (GlcNAc...) asparagine glycosylation.

Saposin-A and saposin-C stimulate the hydrolysis of glucosylceramide by beta-glucosylceramidase (EC 3.2.1.45) and galactosylceramide by beta-galactosylceramidase (EC 3.2.1.46). Saposin-C apparently acts by combining with the enzyme and acidic lipid to form an activated complex, rather than by solubilizing the substrate. In Cavia porcellus (Guinea pig), this protein is Saposin-C (PSAP).